A 493-amino-acid polypeptide reads, in one-letter code: Argininosuccinate lyase (493 aa).

It belongs to the lyase 1 family. Argininosuccinate lyase subfamily.

The protein resides in the cytoplasm. It carries out the reaction 2-(N(omega)-L-arginino)succinate = fumarate + L-arginine. It functions in the pathway amino-acid biosynthesis; L-arginine biosynthesis; L-arginine from L-ornithine and carbamoyl phosphate: step 3/3. The chain is Argininosuccinate lyase from Clavibacter sepedonicus (Clavibacter michiganensis subsp. sepedonicus).